A 466-amino-acid polypeptide reads, in one-letter code: CBL-interacting protein kinase 20 (466 aa).

In terms of domain architecture, Protein kinase spans 12-276 (YELGRSLGHG…IDELVKHPWF (265 aa)). ATP is bound by residues 18–26 (LGHGTFSKV) and lysine 41. Residue aspartate 139 is the Proton acceptor of the active site. The activation loop stretch occupies residues 162-191 (DFGLSALSASRRHDGLLHTTCGTPSYVAPE). The 33-residue stretch at 297–329 (KPANAAMNMKPASLNAFDIISLSQGFDLSGMFC) folds into the NAF domain. The interval 337–366 (TQDQLFVTGKPATAIVSRLEEIAETEHFTV) is PPI. A disordered region spans residues 446–466 (ASEKNQLPAVSEVSPLSSPRN).

This sequence belongs to the protein kinase superfamily. CAMK Ser/Thr protein kinase family. SNF1 subfamily. Mn(2+) serves as cofactor.

It carries out the reaction L-seryl-[protein] + ATP = O-phospho-L-seryl-[protein] + ADP + H(+). The catalysed reaction is L-threonyl-[protein] + ATP = O-phospho-L-threonyl-[protein] + ADP + H(+). In terms of biological role, CIPK serine-threonine protein kinases interact with CBL proteins. Binding of a CBL protein to the regulatory NAF domain of CIPK protein lead to the activation of the kinase in a calcium-dependent manner. The chain is CBL-interacting protein kinase 20 (CIPK20) from Oryza sativa subsp. japonica (Rice).